The chain runs to 82 residues: MIIYPSIDKLLEKVPSRYSLAVLAAKRAHELESGDLKMLSDYKSDKSVGKALEEIAAGDVIIDPKSKMLERDAEKLDRKDQE.

It belongs to the RNA polymerase subunit omega family. As to quaternary structure, the RNAP catalytic core consists of 2 alpha, 1 beta, 1 beta' and 1 omega subunit. When a sigma factor is associated with the core the holoenzyme is formed, which can initiate transcription.

The enzyme catalyses RNA(n) + a ribonucleoside 5'-triphosphate = RNA(n+1) + diphosphate. Its function is as follows. Promotes RNA polymerase assembly. Latches the N- and C-terminal regions of the beta' subunit thereby facilitating its interaction with the beta and alpha subunits. The polypeptide is DNA-directed RNA polymerase subunit omega (Lacticaseibacillus casei (strain BL23) (Lactobacillus casei)).